The chain runs to 427 residues: MSQTDMNVFEQLESEVRSYCRSFPTVFTKAKGYKMWDEAGKEYIDFFSGAGALNYGHNDEKMKKALVDYIMDDGITHSLDMATTPKGKFLQKFHDVILKPRNLDYKVMFPGPTGTNTVESALKLARKVTGRTDIISFTNGFHGMTIGSLSVTGNSFKRKGAGIPLTNVVTMPYDNFVSESLDTLDYLERFLEDGGSGVEIPAAMILETVQGEGGINAARTEWLQRVEKICKRWGILLIIDDVQAGVGRTGTFFSFEDAGITPDIVCLSKSIGGFGLPLAITLFRPELDIWAPGEHNGTFRGNNHAFVTATEALSYWEDDSFEKDIQEKSATISDFLVKLVTEYPEIKGEVKGKGFMVGIASDVEGFASKVTEEAFSRGLIMETSGPNDEVFKLFPPLTIDDEGLEKGLAIIEESIKALVETKELVMQ.

Lys269 is modified (N6-(pyridoxal phosphate)lysine).

It belongs to the class-III pyridoxal-phosphate-dependent aminotransferase family. Pyridoxal 5'-phosphate is required as a cofactor.

It catalyses the reaction L-2,4-diaminobutanoate + 2-oxoglutarate = L-aspartate 4-semialdehyde + L-glutamate. The protein operates within amine and polyamine biosynthesis; ectoine biosynthesis; L-ectoine from L-aspartate 4-semialdehyde: step 1/3. Its function is as follows. Catalyzes reversively the conversion of L-aspartate beta-semialdehyde (ASA) to L-2,4-diaminobutyrate (DABA) by transamination with L-glutamate. In Halalkalibacterium halodurans (strain ATCC BAA-125 / DSM 18197 / FERM 7344 / JCM 9153 / C-125) (Bacillus halodurans), this protein is Diaminobutyrate--2-oxoglutarate transaminase (ectB).